The sequence spans 360 residues: UDP-N-acetylglucosamine--N-acetylmuramyl-(pentapeptide) pyrophosphoryl-undecaprenol N-acetylglucosamine transferase (360 aa).

Residues 12 to 14 (TAG), S198, and Q289 each bind UDP-N-acetyl-alpha-D-glucosamine.

It belongs to the glycosyltransferase 28 family. MurG subfamily.

It localises to the cell membrane. It carries out the reaction Mur2Ac(oyl-L-Ala-gamma-D-Glu-L-Lys-D-Ala-D-Ala)-di-trans,octa-cis-undecaprenyl diphosphate + UDP-N-acetyl-alpha-D-glucosamine = beta-D-GlcNAc-(1-&gt;4)-Mur2Ac(oyl-L-Ala-gamma-D-Glu-L-Lys-D-Ala-D-Ala)-di-trans,octa-cis-undecaprenyl diphosphate + UDP + H(+). The protein operates within cell wall biogenesis; peptidoglycan biosynthesis. Functionally, cell wall formation. Catalyzes the transfer of a GlcNAc subunit on undecaprenyl-pyrophosphoryl-MurNAc-pentapeptide (lipid intermediate I) to form undecaprenyl-pyrophosphoryl-MurNAc-(pentapeptide)GlcNAc (lipid intermediate II). The protein is UDP-N-acetylglucosamine--N-acetylmuramyl-(pentapeptide) pyrophosphoryl-undecaprenol N-acetylglucosamine transferase of Streptococcus equi subsp. equi (strain 4047).